A 552-amino-acid polypeptide reads, in one-letter code: DnaJ homolog subfamily C member 1 (552 aa).

The first 43 residues, 1-43 (MWVPGFGSARLPQRRRSGLESSSVRPLWLLLLFLLAAVRPVRA), serve as a signal peptide directing secretion. Topologically, residues 44 to 149 (WESGDLELFD…RRVRKMSNAE (106 aa)) are lumenal. A J domain is found at 56 to 129 (EEVQLNFYEF…RYDDVLINGL (74 aa)). A helical transmembrane segment spans residues 150 to 170 (LALLLFIILTVGHYAVVWSIY). Topologically, residues 171–552 (LEKQLDELLG…LVQKKKQAKS (382 aa)) are cytoplasmic. The SANT 1 domain occupies 323 to 377 (RQAPEWTEEDLSQLTRSMVKFPGGTPGRWDKIAHELGRSVTDVTTKAKELKDSVT). Residues 370–495 (KELKDSVTSS…ERTRAAEEAW (126 aa)) form a disordered region. S379 is modified (phosphoserine). Positions 419-431 (MEDEEHEAAEGEQ) are enriched in acidic residues. Residues 453–470 (TRVEPEEKLRGKRQKDFD) are compositionally biased toward basic and acidic residues. A phosphoserine mark is found at S477 and S478. A compositionally biased stretch (basic and acidic residues) spans 480–492 (EEKQRKERTRAAE). Positions 490–545 (AAEEAWTQSQQKLLELALQQYPKGASDRWDKIAKCVPSKSKEDCIARYKLLVELVQ) constitute an SANT 2 domain.

As to quaternary structure, interacts (via J domain) with HSPA5. Interacts (via cytosolic domain) with ribosomes. Interacts (via SANT 2 domain) with SERPINA3; the interaction delays the formation of the covalent inhibitory complex SERPINA3-chymotrypsin, but does not alter the catalytic activity of SERPINA3. Interacts (via SANT 2 domain) with ITIH4 (via C-terminus); the interaction protects ITIH4 against in vitro cleavage by kallikrein. As to expression, widely expressed.

Its subcellular location is the endoplasmic reticulum membrane. The protein resides in the nucleus membrane. It is found in the microsome membrane. In terms of biological role, may modulate protein synthesis. This chain is DnaJ homolog subfamily C member 1 (Dnajc1), found in Mus musculus (Mouse).